The sequence spans 694 residues: Cyclic nucleotide-gated ion channel 4 (694 aa).

Basic and acidic residues predominate over residues 1–15 (MATEQEFTRASRFSR). A disordered region spans residues 1-64 (MATEQEFTRA…RIGLTCGGRR (64 aa)). Over 1-92 (MATEQEFTRA…RSKWVREWNK (92 aa)) the chain is Cytoplasmic. Acidic residues predominate over residues 24 to 53 (SEEDNTEEEDEEEEEMEEIEEEEEEEEEED). A helical transmembrane segment spans residues 93–113 (VFLLVCATGLFVDPLFLYTLS). The Extracellular segment spans residues 114 to 126 (VSDTCMCLLVDGW). Residues 127–147 (LALTVTALRSMTDLLHLWNIW) traverse the membrane as a helical segment. Residues 148-187 (IQFKIARRWPYPGGDSDGDTNKGGGTRGSTRVAPPYVKKN) lie on the Cytoplasmic side of the membrane. The chain crosses the membrane as a helical span at residues 188-208 (GFFFDLFVILPLPQVVLWVVI). Residues 209 to 216 (PSLLKRGS) lie on the Extracellular side of the membrane. The chain crosses the membrane as a helical span at residues 217 to 237 (VTLVVSVLLVTFLFQYLPKIY). Topologically, residues 238 to 251 (HSIRHLRRNATLSG) are cytoplasmic. Residues 252–272 (YIFGTVWWGIALNMIAYFVAA) form a helical membrane-spanning segment. Topologically, residues 273–392 (HAAGACWYLL…LESTTEWSEV (120 aa)) are extracellular. Residues 393 to 413 (VFNIIVLTSGLLLVTMLIGNI) form a helical membrane-spanning segment. Topologically, residues 414 to 694 (KVFLHATTSK…KPNPDDFDDY (281 aa)) are cytoplasmic. A nucleoside 3',5'-cyclic phosphate contacts are provided by residues 496-626 (LFQH…ARYY) and Asp-565. Positions 610 to 626 (FRYTFVNEKVKRSARYY) are calmodulin-binding. Residues 631–660 (RTWAAVAVQLAWRRYKHRLTLTSLSFIRPR) enclose the IQ domain.

The protein belongs to the cyclic nucleotide-gated cation channel (TC 1.A.1.5) family. As to quaternary structure, homotetramer or heterotetramer.

The protein localises to the cell membrane. Acts as a cyclic nucleotide-gated ion channel. Permeable to potassium and sodium in a cyclic nucleotide-dependent fashion (cAMP or cGMP). Might constitute a common downstream component of the signaling pathways leading to hypersensitive response (HR). This Arabidopsis thaliana (Mouse-ear cress) protein is Cyclic nucleotide-gated ion channel 4 (CNGC4).